The chain runs to 296 residues: uncharacterized protein (296 aa).

Positions 129 to 170 (VKELKDLIRTVADEHMKMKREHEAAMKELTLLINNQKQQQQQ) form a coiled coil. Positions 165 to 187 (KQQQQQPVPMPRNSTATRPKNLA) are disordered.

This is an uncharacterized protein from Ostreid herpesvirus 1 (isolate France) (OsHV-1).